The sequence spans 166 residues: Small ribosomal subunit protein bS6 (166 aa).

Composition is skewed to basic and acidic residues over residues 96 to 142 (HEEG…DRPP) and 149 to 166 (GGDR…GGAE). A disordered region spans residues 96–166 (HEEGPSAMMQ…PREGFEGGAE (71 aa)).

It belongs to the bacterial ribosomal protein bS6 family.

In terms of biological role, binds together with bS18 to 16S ribosomal RNA. This Mesorhizobium japonicum (strain LMG 29417 / CECT 9101 / MAFF 303099) (Mesorhizobium loti (strain MAFF 303099)) protein is Small ribosomal subunit protein bS6.